The following is a 144-amino-acid chain: Putative pre-16S rRNA nuclease (144 aa).

This sequence belongs to the YqgF nuclease family.

It is found in the cytoplasm. Its function is as follows. Could be a nuclease involved in processing of the 5'-end of pre-16S rRNA. The polypeptide is Putative pre-16S rRNA nuclease (Prochlorococcus marinus (strain NATL1A)).